Here is a 100-residue protein sequence, read N- to C-terminus: Small ribosomal subunit protein uS14c (100 aa).

It belongs to the universal ribosomal protein uS14 family. As to quaternary structure, part of the 30S ribosomal subunit.

It is found in the plastid. The protein resides in the chloroplast. Binds 16S rRNA, required for the assembly of 30S particles. The polypeptide is Small ribosomal subunit protein uS14c (Pisum sativum (Garden pea)).